The chain runs to 183 residues: UPF0098 protein YbcL (183 aa).

Positions 1–21 (MKTLIVSTVLAFITFSAQAAA) are cleaved as a signal peptide. A disulfide bond links Cys-46 and Cys-129.

This sequence belongs to the UPF0098 family. As to quaternary structure, homodimer.

It is found in the periplasm. The sequence is that of UPF0098 protein YbcL (ybcL) from Escherichia coli (strain K12).